The following is a 1217-amino-acid chain: Myosin-1 (1217 aa).

The tract at residues 1–26 is disordered; it reads MAILKRTNRAKAATAAAPNSTGKSNG. Residues 10–19 show a composition bias toward low complexity; sequence AKAATAAAPN. Residues 17-24 and 133-140 contribute to the ATP site; these read APNSTGKS and GESGAGKT. Residues 40-720 enclose the Myosin motor domain; it reads VGVDDLTLLS…TLFALEDMRD (681 aa). Ser361 is modified (phosphoserine). A Phosphotyrosine modification is found at Tyr363. Residues 409-491 form an actin-binding region; the sequence is SIGILDIYGF…PGLFAAMNDA (83 aa). 2 consecutive IQ domains span residues 724–744 and 745–770; these read DTMA…RSEA and AACI…EGTK. At Ser742 the chain carries Phosphoserine. The TH1 domain maps to 778–964; sequence RRRYSILGSR…TIHVGTGLPP (187 aa). Ser782 carries the post-translational modification Phosphoserine. Residues 961–1105 form a disordered region; the sequence is GLPPTSKSKP…PPPPPPPAEV (145 aa). Low complexity predominate over residues 998 to 1013; it reads KPVSMPAAKSKPAPMA. Residues 1015 to 1025 show a composition bias toward polar residues; sequence PVSTAQQTQNR. Residues 1045–1075 show a composition bias toward low complexity; the sequence is TSTTTTIKQATTVSASKPAPSTVTSAASSPS. The segment covering 1076-1088 has biased composition (polar residues); that stretch reads NISKPSAPVANNV. Pro residues predominate over residues 1093–1103; that stretch reads AVPPPPPPPPA. In terms of domain architecture, SH3 spans 1106 to 1165; that stretch reads EKKDLYLALYDFAGRSPNEMTIKKDEIIEIVQKEPSGWWLALKNGAEGWVPATYVTEYKG. Ser1211 bears the Phosphoserine mark.

It belongs to the TRAFAC class myosin-kinesin ATPase superfamily. Myosin family. In terms of assembly, interacts with cam2. Interacts (via SH3 domain) with vrp1. Phosphorylation of the TEDS site (Ser-361) is required for the polarization of the actin cytoskeleton. Phosphorylation probably activates the myosin-I ATPase activity.

Its subcellular location is the cytoplasm. The protein localises to the cytoskeleton. The protein resides in the actin patch. Functionally, type-I myosin implicated in the organization of the actin cytoskeleton. Required for proper actin cytoskeleton polarization. At the cell cortex, assembles in patch-like structures together with proteins from the actin-polymerizing machinery and promotes actin assembly. Functions as actin nucleation-promoting factor (NPF) for the Arp2/3 complex. Contributes to proper septation by transporting vesicles containing septal material to the division site and is involved in the formation of sterol-rich membrane domains at the cell division site. Required also for mating. The polypeptide is Myosin-1 (myo1) (Schizosaccharomyces pombe (strain 972 / ATCC 24843) (Fission yeast)).